Consider the following 369-residue polypeptide: S-adenosylmethionine:tRNA ribosyltransferase-isomerase (369 aa).

Belongs to the QueA family. Monomer.

Its subcellular location is the cytoplasm. The enzyme catalyses 7-aminomethyl-7-carbaguanosine(34) in tRNA + S-adenosyl-L-methionine = epoxyqueuosine(34) in tRNA + adenine + L-methionine + 2 H(+). It functions in the pathway tRNA modification; tRNA-queuosine biosynthesis. Functionally, transfers and isomerizes the ribose moiety from AdoMet to the 7-aminomethyl group of 7-deazaguanine (preQ1-tRNA) to give epoxyqueuosine (oQ-tRNA). The polypeptide is S-adenosylmethionine:tRNA ribosyltransferase-isomerase (Acaryochloris marina (strain MBIC 11017)).